Here is a 645-residue protein sequence, read N- to C-terminus: ATP-dependent zinc metalloprotease FtsH (645 aa).

Residues 1 to 8 (MDFNREHK) lie on the Cytoplasmic side of the membrane. The chain crosses the membrane as a helical span at residues 9–29 (INFLYVLAAMVGVLLIQSLVS). Residues 30–105 (QPDHIRTIPY…FSGEPEPGPW (76 aa)) lie on the Periplasmic side of the membrane. A helical transmembrane segment spans residues 106–126 (PTILGWLMPIVGFALVWMFLI). Over 127–645 (RPMSMGPGMD…ALTVEGGEAQ (519 aa)) the chain is Cytoplasmic. 199-206 (GPPGTGKT) is a binding site for ATP. Position 423 (histidine 423) interacts with Zn(2+). The active site involves glutamate 424. Histidine 427 and aspartate 500 together coordinate Zn(2+). A disordered region spans residues 612–645 (SASVLRDGGDGAADAGQDRSGEHRALTVEGGEAQ). Residues 627-637 (GQDRSGEHRAL) are compositionally biased toward basic and acidic residues.

It in the central section; belongs to the AAA ATPase family. In the C-terminal section; belongs to the peptidase M41 family. In terms of assembly, homohexamer. The cofactor is Zn(2+).

The protein localises to the cell inner membrane. Functionally, acts as a processive, ATP-dependent zinc metallopeptidase for both cytoplasmic and membrane proteins. Plays a role in the quality control of integral membrane proteins. The sequence is that of ATP-dependent zinc metalloprotease FtsH from Paraburkholderia phymatum (strain DSM 17167 / CIP 108236 / LMG 21445 / STM815) (Burkholderia phymatum).